Consider the following 186-residue polypeptide: Peptidyl-tRNA hydrolase (186 aa).

Tyr-14 is a binding site for tRNA. His-19 acts as the Proton acceptor in catalysis. Positions 64, 66, and 112 each coordinate tRNA.

The protein belongs to the PTH family. In terms of assembly, monomer.

The protein localises to the cytoplasm. The enzyme catalyses an N-acyl-L-alpha-aminoacyl-tRNA + H2O = an N-acyl-L-amino acid + a tRNA + H(+). Its function is as follows. Hydrolyzes ribosome-free peptidyl-tRNAs (with 1 or more amino acids incorporated), which drop off the ribosome during protein synthesis, or as a result of ribosome stalling. Catalyzes the release of premature peptidyl moieties from peptidyl-tRNA molecules trapped in stalled 50S ribosomal subunits, and thus maintains levels of free tRNAs and 50S ribosomes. This is Peptidyl-tRNA hydrolase from Lachnospira eligens (strain ATCC 27750 / DSM 3376 / VPI C15-48 / C15-B4) (Eubacterium eligens).